We begin with the raw amino-acid sequence, 207 residues long: Protein Nef (207 aa).

Gly-2 carries N-myristoyl glycine; by host lipidation. Position 6 is a phosphoserine; by host (Ser-6). An acidic; interacts with host PACS1 and PACS2; stabilizes the interaction of NEF/MHC-I with host AP1M1; necessary for MHC-I internalization region spans residues 63-66; sequence EEZE. The interval 70-79 is SH3-binding; interaction with Src family tyrosine kinases; the sequence is PVRPQVPLRP. A PxxP; stabilizes the interaction of NEF/MHC-I with host AP1M1; necessary for MHC-I internalization motif is present at residues 73–76; the sequence is PQVP. The mediates dimerization, Nef-PTE1 interaction stretch occupies residues 109–125; it reads EILDLWVYHTQGFFPDW. The tract at residues 149–181 is binding to ATP6V1H; that stretch reads LSEEAVEEANEGDNNALLHPICQHGVDDDHKQV. A Dileucine internalization motif; necessary for CD4 internalization motif is present at residues 165–166; sequence LL. Residues 175–176 carry the Diacidic; necessary for CD4 internalization motif; sequence DD.

The protein belongs to the lentivirus primate group Nef protein family. As to quaternary structure, monomer; cytosolic form. Homodimer; membrane bound form. Interacts with Nef associated p21-activated kinase (PAK2); this interaction activates PAK2. Associates with the Nef-MHC-I-AP1 complex; this complex is required for MHC-I internalization. Interacts (via C-terminus) with host PI3-kinase. Interacts with host PACS1; this interaction seems to be weak. Interacts with host PACS2. Interacts with host LCK and MAPK3; these interactions inhibit the kinase activity of the latter. Interacts with host ATP6V1H; this interaction may play a role in CD4 endocytosis. Associates with the CD4-Nef-AP2 complex; this complex is required for CD4 internalization. Interacts with host AP2 subunit alpha and AP2 subunit sigma2. Interacts with TCR-zeta chain; this interaction up-regulates the Fas ligand (FasL) surface expression. Interacts with host HCK, LYN, and SRC; these interactions activate the Src family kinases. Interacts with MAP3K5; this interaction inhibits the Fas and TNFR-mediated death signals. Interacts with beta-COP and PTE1. Interacts with human RACK1; this increases Nef phosphorylation by PKC. Interacts with TP53; this interaction decreases the half-life of TP53, protecting the infected cell against p53-mediated apoptosis. In terms of processing, the virion-associated Nef proteins are cleaved by the viral protease to release the soluble C-terminal core protein. Nef is probably cleaved concomitantly with viral structural proteins on maturation of virus particles. Post-translationally, myristoylated. Phosphorylated on serine residues, probably by host PKCdelta and theta.

It localises to the host cell membrane. The protein resides in the virion. Its subcellular location is the secreted. The protein localises to the host Golgi apparatus membrane. Factor of infectivity and pathogenicity, required for optimal virus replication. Alters numerous pathways of T-lymphocyte function and down-regulates immunity surface molecules in order to evade host defense and increase viral infectivity. Alters the functionality of other immunity cells, like dendritic cells, monocytes/macrophages and NK cells. Functionally, in infected CD4(+) T-lymphocytes, down-regulates the surface MHC-I, mature MHC-II, CD4, CD28, CCR5 and CXCR4 molecules. Mediates internalization and degradation of host CD4 through the interaction of with the cytoplasmic tail of CD4, the recruitment of AP-2 (clathrin adapter protein complex 2), internalization through clathrin coated pits, and subsequent transport to endosomes and lysosomes for degradation. Diverts host MHC-I molecules to the trans-Golgi network-associated endosomal compartments by an endocytic pathway to finally target them for degradation. MHC-I down-regulation may involve AP-1 (clathrin adapter protein complex 1) or possibly Src family kinase-ZAP70/Syk-PI3K cascade recruited by PACS2. In consequence infected cells are masked for immune recognition by cytotoxic T-lymphocytes. Decreasing the number of immune receptors also prevents reinfection by more HIV particles (superinfection). Down-regulates host SERINC3 and SERINC5 thereby excluding these proteins from the viral particles. Virion infectivity is drastically higher when SERINC3 or SERINC5 are excluded from the viral envelope, because these host antiviral proteins impair the membrane fusion event necessary for subsequent virion penetration. In terms of biological role, bypasses host T-cell signaling by inducing a transcriptional program nearly identical to that of anti-CD3 cell activation. Interaction with TCR-zeta chain up-regulates the Fas ligand (FasL). Increasing surface FasL molecules and decreasing surface MHC-I molecules on infected CD4(+) cells send attacking cytotoxic CD8+ T-lymphocytes into apoptosis. Its function is as follows. Plays a role in optimizing the host cell environment for viral replication without causing cell death by apoptosis. Protects the infected cells from apoptosis in order to keep them alive until the next virus generation is ready to strike. Inhibits the Fas and TNFR-mediated death signals by blocking MAP3K5/ASK1. Decreases the half-life of TP53, protecting the infected cell against p53-mediated apoptosis. Inhibits the apoptotic signals regulated by the Bcl-2 family proteins through the formation of a Nef/PI3-kinase/PAK2 complex that leads to activation of PAK2 and induces phosphorylation of host BAD. Extracellular Nef protein targets CD4(+) T-lymphocytes for apoptosis by interacting with CXCR4 surface receptors. The polypeptide is Protein Nef (Homo sapiens (Human)).